Consider the following 129-residue polypeptide: Translation initiation factor 5A (129 aa).

Lys36 is modified (hypusine).

Belongs to the eIF-5A family.

The protein localises to the cytoplasm. In terms of biological role, functions by promoting the formation of the first peptide bond. The polypeptide is Translation initiation factor 5A (eIF5A) (Methanobrevibacter smithii (strain ATCC 35061 / DSM 861 / OCM 144 / PS)).